The following is a 513-amino-acid chain: 2-isopropylmalate synthase (513 aa).

The region spanning 5–268 (LIIFDTTLRD…DVGIDTTQIV (264 aa)) is the Pyruvate carboxyltransferase domain. Mn(2+) is bound by residues D14, H202, H204, and N239. The interval 394 to 513 (RFISLSQRSE…KAVQKINPQI (120 aa)) is regulatory domain.

The protein belongs to the alpha-IPM synthase/homocitrate synthase family. LeuA type 1 subfamily. Homodimer. Mn(2+) serves as cofactor.

It is found in the cytoplasm. It catalyses the reaction 3-methyl-2-oxobutanoate + acetyl-CoA + H2O = (2S)-2-isopropylmalate + CoA + H(+). It functions in the pathway amino-acid biosynthesis; L-leucine biosynthesis; L-leucine from 3-methyl-2-oxobutanoate: step 1/4. In terms of biological role, catalyzes the condensation of the acetyl group of acetyl-CoA with 3-methyl-2-oxobutanoate (2-ketoisovalerate) to form 3-carboxy-3-hydroxy-4-methylpentanoate (2-isopropylmalate). This chain is 2-isopropylmalate synthase, found in Cupriavidus metallidurans (strain ATCC 43123 / DSM 2839 / NBRC 102507 / CH34) (Ralstonia metallidurans).